Here is a 106-residue protein sequence, read N- to C-terminus: Large ribosomal subunit protein uL24 (106 aa).

It belongs to the universal ribosomal protein uL24 family. As to quaternary structure, part of the 50S ribosomal subunit.

Its function is as follows. One of two assembly initiator proteins, it binds directly to the 5'-end of the 23S rRNA, where it nucleates assembly of the 50S subunit. One of the proteins that surrounds the polypeptide exit tunnel on the outside of the subunit. In Albidiferax ferrireducens (strain ATCC BAA-621 / DSM 15236 / T118) (Rhodoferax ferrireducens), this protein is Large ribosomal subunit protein uL24.